Consider the following 409-residue polypeptide: Isovaleryl-CoA dehydrogenase, mitochondrial (409 aa).

The N-terminal 22 residues, 1–22 (MQRFFSARSILGYAVKTRRRSF), are a transit peptide targeting the mitochondrion. FAD contacts are provided by residues 151-160 (LAMSEPNAGS) and 184-186 (WCT). S160 provides a ligand contact to substrate. Substrate is bound by residues 206-207 (SK), Y261, and 268-271 (DLER). E270 acts as the Proton acceptor in catalysis. Residues R296, Q307, and 364–368 (QCLGG) contribute to the FAD site. Residue 391 to 392 (AG) coordinates substrate. Residue 393–395 (TSE) participates in FAD binding.

It belongs to the acyl-CoA dehydrogenase family. In terms of assembly, homodimer. Requires FAD as cofactor. As to expression, expressed in leaves, stems and flowers. Not detected in roots.

It localises to the mitochondrion. The enzyme catalyses 3-methylbutanoyl-CoA + oxidized [electron-transfer flavoprotein] + H(+) = 3-methylbut-2-enoyl-CoA + reduced [electron-transfer flavoprotein]. Its pathway is amino-acid degradation; L-leucine degradation; (S)-3-hydroxy-3-methylglutaryl-CoA from 3-isovaleryl-CoA: step 1/3. Involved in degradation of the branched-chain amino acids, phytol and lysine for the supply of carbon and electrons to the ETF/ETFQO complex during dark-induced sugar starvation. This is Isovaleryl-CoA dehydrogenase, mitochondrial (IVD) from Arabidopsis thaliana (Mouse-ear cress).